We begin with the raw amino-acid sequence, 327 residues long: Malate dehydrogenase 1 (327 aa).

12–18 provides a ligand contact to NAD(+); that stretch reads GAAGQIA. Positions 93 and 99 each coordinate substrate. NAD(+) contacts are provided by residues Asn-106, Gln-113, and 130–132; that span reads VGN. Substrate-binding residues include Asn-132 and Arg-163. His-188 functions as the Proton acceptor in the catalytic mechanism.

This sequence belongs to the LDH/MDH superfamily. MDH type 2 family.

The enzyme catalyses (S)-malate + NAD(+) = oxaloacetate + NADH + H(+). Its function is as follows. Catalyzes the reversible oxidation of malate to oxaloacetate. This chain is Malate dehydrogenase 1, found in Burkholderia thailandensis (strain ATCC 700388 / DSM 13276 / CCUG 48851 / CIP 106301 / E264).